The following is a 329-amino-acid chain: D-alanine--D-alanine ligase (329 aa).

One can recognise an ATP-grasp domain in the interval 121–327; the sequence is KLWYDALDIP…FSEFLAQCVT (207 aa). ATP is bound at residue 151–206; that stretch reads AFGHWGSIFVKAARQGSSVGCYKVTTEDQIAPAIEAAFGFSEQVLVEQAVKPRELE. Mg(2+)-binding residues include Asp-281, Glu-294, and Asn-296.

It belongs to the D-alanine--D-alanine ligase family. Mg(2+) is required as a cofactor. The cofactor is Mn(2+).

It is found in the cytoplasm. The catalysed reaction is 2 D-alanine + ATP = D-alanyl-D-alanine + ADP + phosphate + H(+). It participates in cell wall biogenesis; peptidoglycan biosynthesis. Its function is as follows. Cell wall formation. This is D-alanine--D-alanine ligase from Vibrio cholerae serotype O1 (strain ATCC 39541 / Classical Ogawa 395 / O395).